A 447-amino-acid chain; its full sequence is Argininosuccinate synthase (447 aa).

ATP-binding positions include 17-25 (AFSGGLDTS) and Ala-43. Tyr-99 contacts L-citrulline. Residues Gly-129 and Thr-131 each contribute to the ATP site. Thr-131, Asn-135, and Asp-136 together coordinate L-aspartate. Asn-135 is a binding site for L-citrulline. Residue Asp-136 participates in ATP binding. L-citrulline contacts are provided by Arg-139 and Ser-192. Residue Asp-194 coordinates ATP. The L-citrulline site is built by Thr-201, Glu-203, and Glu-280.

This sequence belongs to the argininosuccinate synthase family. Type 2 subfamily. Homotetramer.

Its subcellular location is the cytoplasm. It catalyses the reaction L-citrulline + L-aspartate + ATP = 2-(N(omega)-L-arginino)succinate + AMP + diphosphate + H(+). The protein operates within amino-acid biosynthesis; L-arginine biosynthesis; L-arginine from L-ornithine and carbamoyl phosphate: step 2/3. This Salmonella newport (strain SL254) protein is Argininosuccinate synthase.